Reading from the N-terminus, the 211-residue chain is FMN-dependent NADH:quinone oxidoreductase 2 (211 aa).

Residues S10 and 17–19 (SRS) each bind FMN.

It belongs to the azoreductase type 1 family. In terms of assembly, homodimer. Requires FMN as cofactor.

It catalyses the reaction 2 a quinone + NADH + H(+) = 2 a 1,4-benzosemiquinone + NAD(+). The enzyme catalyses N,N-dimethyl-1,4-phenylenediamine + anthranilate + 2 NAD(+) = 2-(4-dimethylaminophenyl)diazenylbenzoate + 2 NADH + 2 H(+). In terms of biological role, quinone reductase that provides resistance to thiol-specific stress caused by electrophilic quinones. Its function is as follows. Also exhibits azoreductase activity. Catalyzes the reductive cleavage of the azo bond in aromatic azo compounds to the corresponding amines. The polypeptide is FMN-dependent NADH:quinone oxidoreductase 2 (Listeria monocytogenes serovar 1/2a (strain ATCC BAA-679 / EGD-e)).